Here is a 60-residue protein sequence, read N- to C-terminus: Cytotoxin sagitoxin (60 aa).

4 disulfides stabilise this stretch: Cys-3–Cys-21, Cys-14–Cys-38, Cys-42–Cys-53, and Cys-54–Cys-59.

It belongs to the three-finger toxin family. Short-chain subfamily. Type IA cytotoxin sub-subfamily. Monomer in solution; Homodimer and oligomer (homohexamer) in the presence of negatively charged lipids forming a pore with a size ranging between 20 and 30 Angstroms. In terms of tissue distribution, expressed by the venom gland.

The protein localises to the secreted. The protein resides in the target cell membrane. Shows cytolytic activity on many different cells by forming pore in lipid membranes. In vivo, increases heart rate or kill the animal by cardiac arrest. In addition, it binds to heparin with high affinity, interacts with Kv channel-interacting protein 1 (KCNIP1) in a calcium-independent manner, and binds to integrin alpha-V/beta-3 (ITGAV/ITGB3) with moderate affinity. In Naja sagittifera (Andaman cobra), this protein is Cytotoxin sagitoxin.